The chain runs to 135 residues: Fluoride-specific ion channel FluC 1 (135 aa).

4 helical membrane passes run 7-27, 32-52, 65-85, and 96-116; these read LAVG…GLVL, GFPY…PFLM, LALA…SFSV, and WSAF…LSLL. Residues Gly75 and Thr78 each coordinate Na(+).

It belongs to the fluoride channel Fluc/FEX (TC 1.A.43) family.

The protein localises to the cell membrane. It carries out the reaction fluoride(in) = fluoride(out). Its activity is regulated as follows. Na(+) is not transported, but it plays an essential structural role and its presence is essential for fluoride channel function. Its function is as follows. Fluoride-specific ion channel. Important for reducing fluoride concentration in the cell, thus reducing its toxicity. This chain is Fluoride-specific ion channel FluC 1, found in Latilactobacillus sakei subsp. sakei (strain 23K) (Lactobacillus sakei subsp. sakei).